We begin with the raw amino-acid sequence, 211 residues long: Protein-L-isoaspartate O-methyltransferase (211 aa).

Ser62 is a catalytic residue.

This sequence belongs to the methyltransferase superfamily. L-isoaspartyl/D-aspartyl protein methyltransferase family.

It is found in the cytoplasm. The enzyme catalyses [protein]-L-isoaspartate + S-adenosyl-L-methionine = [protein]-L-isoaspartate alpha-methyl ester + S-adenosyl-L-homocysteine. Catalyzes the methyl esterification of L-isoaspartyl residues in peptides and proteins that result from spontaneous decomposition of normal L-aspartyl and L-asparaginyl residues. It plays a role in the repair and/or degradation of damaged proteins. The polypeptide is Protein-L-isoaspartate O-methyltransferase (Shewanella halifaxensis (strain HAW-EB4)).